A 164-amino-acid chain; its full sequence is HTH-type transcriptional regulator IscR (164 aa).

The 130-residue stretch at 2–131 (RLTSKGRYAV…NNITLGELVN (130 aa)) folds into the HTH rrf2-type domain. The H-T-H motif DNA-binding region spans 28 to 51 (LADISERQGISLSYLEQLFSRLRK). Cys-92, Cys-98, and Cys-104 together coordinate [2Fe-2S] cluster.

[2Fe-2S] cluster is required as a cofactor.

In terms of biological role, regulates the transcription of several operons and genes involved in the biogenesis of Fe-S clusters and Fe-S-containing proteins. The chain is HTH-type transcriptional regulator IscR from Salmonella agona (strain SL483).